The following is a 276-amino-acid chain: Probable endonuclease 4 (276 aa).

Zn(2+) is bound by residues H66, H106, E141, D175, H178, H210, D223, H225, and E255.

Belongs to the AP endonuclease 2 family. The cofactor is Zn(2+).

It catalyses the reaction Endonucleolytic cleavage to 5'-phosphooligonucleotide end-products.. In terms of biological role, endonuclease IV plays a role in DNA repair. It cleaves phosphodiester bonds at apurinic or apyrimidinic (AP) sites, generating a 3'-hydroxyl group and a 5'-terminal sugar phosphate. The chain is Probable endonuclease 4 from Heliobacterium modesticaldum (strain ATCC 51547 / Ice1).